A 710-amino-acid polypeptide reads, in one-letter code: ARM REPEAT PROTEIN INTERACTING WITH ABF2 (710 aa).

The disordered stretch occupies residues 1–35 (MDQQPERREGRSFPERKGQKRKLEEGAAAVEDREI). 9 ARM repeats span residues 85-127 (EDLV…EKGS), 138-185 (PEYQ…NLAH), 188-227 (SSIK…TLAF), 230-269 (DDNK…NLVH), 272-311 (PHIK…QFAS), 314-353 (SDCK…RLAQ), 355-394 (AHNQ…GLAD), 429-468 (LKRL…HLCS), and 470-509 (EDQR…KLAN). Residues 541–608 (SDVTFLVEGR…IYTGSVDITN (68 aa)) form the BTB domain.

As to quaternary structure, interacts with ABF2. Interacts with DUF7/AIP1. In terms of tissue distribution, detected in embryos and most of the vegetative and reproductive organs.

The protein resides in the nucleus. It participates in protein modification; protein ubiquitination. May act as a substrate-specific adapter of an E3 ubiquitin-protein ligase complex (CUL3-RBX1-BTB) which mediates the ubiquitination and subsequent proteasomal degradation of target proteins. Acts as a positive regulator of ABA response via the modulation of the transcriptional activity of ABF2, a transcription factor which controls ABA-dependent gene expression via the G-box-type ABA-responsive elements. Negative regulator of seed germination and young seedling growth. The chain is ARM REPEAT PROTEIN INTERACTING WITH ABF2 (ARIA) from Arabidopsis thaliana (Mouse-ear cress).